We begin with the raw amino-acid sequence, 381 residues long: Chorismate synthase (381 aa).

Positions 41 and 47 each coordinate NADP(+). FMN-binding positions include 127–129, 247–248, Gly291, 306–310, and Arg332; these read RAS, QA, and KPIPT.

Belongs to the chorismate synthase family. In terms of assembly, homotetramer. FMNH2 serves as cofactor.

The catalysed reaction is 5-O-(1-carboxyvinyl)-3-phosphoshikimate = chorismate + phosphate. It functions in the pathway metabolic intermediate biosynthesis; chorismate biosynthesis; chorismate from D-erythrose 4-phosphate and phosphoenolpyruvate: step 7/7. Its function is as follows. Catalyzes the anti-1,4-elimination of the C-3 phosphate and the C-6 proR hydrogen from 5-enolpyruvylshikimate-3-phosphate (EPSP) to yield chorismate, which is the branch point compound that serves as the starting substrate for the three terminal pathways of aromatic amino acid biosynthesis. This reaction introduces a second double bond into the aromatic ring system. This chain is Chorismate synthase, found in Anaeromyxobacter sp. (strain K).